A 389-amino-acid polypeptide reads, in one-letter code: Phosphoglycerate kinase (389 aa).

Residues 21–23, arginine 36, 59–62, arginine 112, and arginine 145 contribute to the substrate site; these read DLN and HLGR. ATP-binding positions include lysine 196, glutamate 313, and 342 to 345; that span reads GGDT.

Belongs to the phosphoglycerate kinase family. In terms of assembly, monomer.

The protein localises to the cytoplasm. It carries out the reaction (2R)-3-phosphoglycerate + ATP = (2R)-3-phospho-glyceroyl phosphate + ADP. It participates in carbohydrate degradation; glycolysis; pyruvate from D-glyceraldehyde 3-phosphate: step 2/5. This chain is Phosphoglycerate kinase, found in Mannheimia succiniciproducens (strain KCTC 0769BP / MBEL55E).